The following is a 202-amino-acid chain: Ribosomal RNA small subunit methyltransferase G (202 aa).

S-adenosyl-L-methionine contacts are provided by residues Gly75, Phe80, Val125–Gln126, and Arg139.

This sequence belongs to the methyltransferase superfamily. RNA methyltransferase RsmG family.

The protein resides in the cytoplasm. Functionally, specifically methylates the N7 position of a guanine in 16S rRNA. In Mesomycoplasma hyopneumoniae (strain 7448) (Mycoplasma hyopneumoniae), this protein is Ribosomal RNA small subunit methyltransferase G.